The sequence spans 277 residues: Anamorsin homolog 2 (277 aa).

Residues 1 to 141 are N-terminal SAM-like domain; sequence MDTQPIVLVI…RKPAWDTGSS (141 aa). Residues 141-186 are linker; sequence SFKLKKKVAQKPANVVTFDIPAFKVQLGDDLDDLIDEDSLLTEEDL. [2Fe-2S] cluster contacts are provided by cysteine 197, cysteine 207, cysteine 210, and cysteine 212. The fe-S binding site A stretch occupies residues 197–212; the sequence is CEVGKAGRKACKNCTC. 4 residues coordinate [4Fe-4S] cluster: cysteine 238, cysteine 241, cysteine 249, and cysteine 252. Short sequence motifs (cx2C motif) lie at residues 238–241 and 249–252; these read CGSC and CSTC. Residues 238 to 252 are fe-S binding site B; it reads CGSCGLGDAFRCSTC.

The protein belongs to the anamorsin family. As to quaternary structure, monomer. Requires [2Fe-2S] cluster as cofactor. [4Fe-4S] cluster serves as cofactor.

The protein resides in the cytoplasm. Its subcellular location is the mitochondrion intermembrane space. Functionally, component of the cytosolic iron-sulfur (Fe-S) protein assembly (CIA) machinery. Required for the maturation of extramitochondrial Fe-S proteins. Part of an electron transfer chain functioning in an early step of cytosolic Fe-S biogenesis, facilitating the de novo assembly of a [4Fe-4S] cluster on the cytosolic Fe-S scaffold complex. Electrons are transferred from NADPH via a FAD- and FMN-containing diflavin oxidoreductase. Together with the diflavin oxidoreductase, also required for the assembly of the diferric tyrosyl radical cofactor of ribonucleotide reductase (RNR), probably by providing electrons for reduction during radical cofactor maturation in the catalytic small subunit. The chain is Anamorsin homolog 2 from Picea sitchensis (Sitka spruce).